The chain runs to 530 residues: RNA-binding protein 39 (530 aa).

Residues 1–146 (MADDIDIEAM…PVREPIDNLT (146 aa)) form a disordered region. At Ala-2 the chain carries N-acetylalanine. A compositionally biased stretch (basic and acidic residues) spans 14–32 (PYKKDENKLNSANGHEERS). Composition is skewed to basic residues over residues 33–56 (KKRK…KERK) and 64–95 (KKSK…RGRY). Tyr-95 bears the Phosphotyrosine mark. Residues Ser-97 and Ser-100 each carry the phosphoserine modification. Residue Lys-111 forms a Glycyl lysine isopeptide (Lys-Gly) (interchain with G-Cter in SUMO2) linkage. Ser-117 carries the post-translational modification Phosphoserine. Lys-119 participates in a covalent cross-link: Glycyl lysine isopeptide (Lys-Gly) (interchain with G-Cter in SUMO2). A compositionally biased stretch (basic residues) spans 119–130 (KLSRRRSRSKSP). A phosphoserine mark is found at Ser-121 and Ser-136. Residues 131–146 (FRKDKSPVREPIDNLT) are compositionally biased toward basic and acidic residues. Position 146 is a phosphothreonine (Thr-146). In terms of domain architecture, RRM 1 spans 153–230 (RTVFCMQLAA…VPIIVQASQA (78 aa)). A Glycyl lysine isopeptide (Lys-Gly) (interchain with G-Cter in SUMO2) cross-link involves residue Lys-244. Residues 250-328 (MRLYVGSLHF…RPMKVGHVTE (79 aa)) form the RRM 2 domain. The activating domain stretch occupies residues 291-355 (KGYGFITFSD…RTGIDLGTTG (65 aa)). The segment at 291 to 406 (KGYGFITFSD…IDLQTRLSQQ (116 aa)) is interaction with JUN. Ser-334, Ser-337, and Ser-341 each carry phosphoserine. Positions 355–406 (GRLQLMARLAEGTGLQIPPAAQQALQMSGSLAFGAVAEFSFVIDLQTRLSQQ) are interaction with ESR1 and ESR2. Positions 406–530 (QTEASALAAA…ATQLLVPSRR (125 aa)) are interaction with NCOA6. The 64-residue stretch at 445 to 508 (EIKDDVIEEC…KMITAAYVPL (64 aa)) folds into the RRM 3 domain.

The protein belongs to the splicing factor SR family. Interacts with NCOA6 and JUN. Interacts with ESR1 and ESR2, in the presence of estradiol (E2). Interacts with RSRC1 (via Arg/Ser-rich domain). Interacts with SF3B1. Interacts with ZNF106 (via N-terminus).

The protein localises to the nucleus. In terms of biological role, RNA-binding protein that acts as a pre-mRNA splicing factor. Acts by promoting exon inclusion via regulation of exon cassette splicing. Also acts as a transcriptional coactivator for steroid nuclear receptors ESR1/ER-alpha and ESR2/ER-beta, and JUN/AP-1, independently of the pre-mRNA splicing factor activity. The sequence is that of RNA-binding protein 39 (Rbm39) from Mus musculus (Mouse).